A 294-amino-acid chain; its full sequence is UDP-3-O-acyl-N-acetylglucosamine deacetylase (294 aa).

Residues H75, H232, and D236 each contribute to the Zn(2+) site. Catalysis depends on H259, which acts as the Proton donor.

This sequence belongs to the LpxC family. It depends on Zn(2+) as a cofactor.

It carries out the reaction a UDP-3-O-[(3R)-3-hydroxyacyl]-N-acetyl-alpha-D-glucosamine + H2O = a UDP-3-O-[(3R)-3-hydroxyacyl]-alpha-D-glucosamine + acetate. It participates in glycolipid biosynthesis; lipid IV(A) biosynthesis; lipid IV(A) from (3R)-3-hydroxytetradecanoyl-[acyl-carrier-protein] and UDP-N-acetyl-alpha-D-glucosamine: step 2/6. Its function is as follows. Catalyzes the hydrolysis of UDP-3-O-myristoyl-N-acetylglucosamine to form UDP-3-O-myristoylglucosamine and acetate, the committed step in lipid A biosynthesis. In Campylobacter hominis (strain ATCC BAA-381 / DSM 21671 / CCUG 45161 / LMG 19568 / NCTC 13146 / CH001A), this protein is UDP-3-O-acyl-N-acetylglucosamine deacetylase.